Consider the following 604-residue polypeptide: NADP-dependent malic enzyme, mitochondrial (604 aa).

Positions 28 to 50 (SAPAQGCHSKSGPPRPVPLKKRG) are disordered. Tyrosine 137 acts as the Proton donor in catalysis. Arginine 190 is a binding site for NADP(+). Lysine 208 functions as the Proton acceptor in the catalytic mechanism. Positions 280, 281, and 304 each coordinate a divalent metal cation. NADP(+) is bound at residue aspartate 304. At serine 371 the chain carries Phosphoserine. Asparagine 443 lines the NADP(+) pocket.

It belongs to the malic enzymes family. Mg(2+) serves as cofactor. Requires Mn(2+) as cofactor.

It is found in the mitochondrion matrix. The enzyme catalyses (S)-malate + NADP(+) = pyruvate + CO2 + NADPH. It catalyses the reaction oxaloacetate + H(+) = pyruvate + CO2. This is NADP-dependent malic enzyme, mitochondrial (Me3) from Mus musculus (Mouse).